Here is a 601-residue protein sequence, read N- to C-terminus: Glutathione-regulated potassium-efflux system protein KefB (601 aa).

A run of 13 helical transmembrane segments spans residues 4 to 24, 29 to 49, 55 to 75, 87 to 107, 115 to 135, 152 to 172, 177 to 197, 207 to 227, 230 to 250, 268 to 288, 291 to 311, 326 to 346, and 356 to 376; these read SDLL…VPLA, IGAV…GLGF, EILH…GLEL, IFGV…GLLM, AAVV…LQLM, VLLF…LLAG, HVNW…LIGG, FIAS…LVLG, LFME…GVLL, GLLL…GVLY, LLWV…VLYL, FAGV…LPAS, and ALLL…MKGI. In terms of domain architecture, RCK N-terminal spans 400–519; it reads KPQVIIVGFG…AGVTQFSRET (120 aa).

Belongs to the monovalent cation:proton antiporter 2 (CPA2) transporter (TC 2.A.37) family. KefB subfamily. As to quaternary structure, interacts with the regulatory subunit KefG.

It localises to the cell inner membrane. In terms of biological role, pore-forming subunit of a potassium efflux system that confers protection against electrophiles. Catalyzes K(+)/H(+) antiport. In Klebsiella pneumoniae subsp. pneumoniae (strain ATCC 700721 / MGH 78578), this protein is Glutathione-regulated potassium-efflux system protein KefB.